The chain runs to 65 residues: Large ribosomal subunit protein bL35 (65 aa).

Residues 1–11 (MPKIKTRRSAA) show a composition bias toward basic residues. Disordered stretches follow at residues 1 to 24 (MPKI…KFKR) and 41 to 65 (RMRL…MPYA).

It belongs to the bacterial ribosomal protein bL35 family.

The sequence is that of Large ribosomal subunit protein bL35 from Nitratidesulfovibrio vulgaris (strain DSM 19637 / Miyazaki F) (Desulfovibrio vulgaris).